The chain runs to 536 residues: L-ornithine N(5)-monooxygenase SIDA (536 aa).

A disordered region spans residues Met-1 to Ala-25. FAD is bound by residues Glu-115–His-123 and Gln-134. Lys-139 is a binding site for L-ornithine. An FAD-binding site is contributed by Val-200. Arg-310 provides a ligand contact to NADP(+). Residues Asn-324–Phe-327 and Asn-354 contribute to the L-ornithine site. Residue Thr-515–Leu-517 coordinates FAD. An L-ornithine-binding site is contributed by Ser-518.

This sequence belongs to the lysine N(6)-hydroxylase/L-ornithine N(5)-oxygenase family. In terms of assembly, homotetramer. The cofactor is FAD.

The catalysed reaction is L-ornithine + NADH + O2 = N(5)-hydroxy-L-ornithine + NAD(+) + H2O. The enzyme catalyses L-ornithine + NADPH + O2 = N(5)-hydroxy-L-ornithine + NADP(+) + H2O. Its pathway is siderophore biosynthesis. Functionally, L-ornithine N(5)-monooxygenase; part of the gene cluster that mediates the biosynthesis of at least 11 siderophores, including beauverichelin A, dimerumic acid (DA), Na-dimethyl coprogen (NADC), eleutherazine B, ferricrocin (FC), fusarinine A, fusarinine C (FsC), metachelin A, mevalonolactone, rhodotorulic acid (RA) and tenellin. This cocktail of siderophores for iron metabolism is essential for virulence, and more specifically for the fungal virulence in penetrating through the host cuticle. Siderophore synthesis is also involved in conidial germination under iron-deficient conditions. SIDA initiates the biosynthesis of these siderophores with the enzymatic hydroxylation of ornithine. SIDA is indispensable for the production of most siderophores including fusarinine C and ferricrocin but not mevalonolactone and eleutherazine B. However, SIDA mediates the metabolic interplay between synthesis of mevalonolactone and eleutherazine B and other siderophores. This chain is L-ornithine N(5)-monooxygenase SIDA, found in Beauveria bassiana (strain ARSEF 2860) (White muscardine disease fungus).